A 445-amino-acid chain; its full sequence is CBL-interacting protein kinase 3 (445 aa).

A Protein kinase domain is found at 19–274 (YELGRAIGQG…TSQVLQDQWF (256 aa)). Residues 25–33 (IGQGTFAKV) and K48 contribute to the ATP site. D142 acts as the Proton acceptor in catalysis. An activation loop region spans residues 160-189 (DFGLSAISEQVKADGLLHTTCGTPNYVAPE). The NAF domain occupies 309-336 (AMEEQPTLMNAFELISLNKGLNLDNFFE). The interval 342 to 371 (KRETRFTSQCPPKEIINRIEEAANLLGFNI) is PPI.

The protein belongs to the protein kinase superfamily. CAMK Ser/Thr protein kinase family. SNF1 subfamily. Mn(2+) is required as a cofactor.

It catalyses the reaction L-seryl-[protein] + ATP = O-phospho-L-seryl-[protein] + ADP + H(+). The enzyme catalyses L-threonyl-[protein] + ATP = O-phospho-L-threonyl-[protein] + ADP + H(+). CIPK serine-threonine protein kinases interact with CBL proteins. Binding of a CBL protein to the regulatory NAF domain of CIPK protein lead to the activation of the kinase in a calcium-dependent manner. The chain is CBL-interacting protein kinase 3 (CIPK3) from Oryza sativa subsp. japonica (Rice).